Here is an 84-residue protein sequence, read N- to C-terminus: Small ribosomal subunit protein eS27-like (84 aa).

Over residues 1-16 (MPLARDLLHPSLEEEK) the composition is skewed to basic and acidic residues. The segment at 1–23 (MPLARDLLHPSLEEEKKKHKKKR) is disordered. The C4-type zinc finger occupies 38–60 (PGCYKITTVFSHAQTVVLCVGCS).

It belongs to the eukaryotic ribosomal protein eS27 family. Requires Zn(2+) as cofactor.

The polypeptide is Small ribosomal subunit protein eS27-like (Mus musculus (Mouse)).